A 570-amino-acid chain; its full sequence is Formate--tetrahydrofolate ligase (570 aa).

Threonine 65–threonine 72 is a binding site for ATP.

Belongs to the formate--tetrahydrofolate ligase family.

The catalysed reaction is (6S)-5,6,7,8-tetrahydrofolate + formate + ATP = (6R)-10-formyltetrahydrofolate + ADP + phosphate. The protein operates within one-carbon metabolism; tetrahydrofolate interconversion. The polypeptide is Formate--tetrahydrofolate ligase (Shewanella oneidensis (strain ATCC 700550 / JCM 31522 / CIP 106686 / LMG 19005 / NCIMB 14063 / MR-1)).